The sequence spans 516 residues: NADH-quinone oxidoreductase subunit N (516 aa).

14 consecutive transmembrane segments (helical) span residues 12-32 (LLPA…DLLV), 37-57 (VTIS…VLVG), 81-101 (LVAV…GPLL), 108-128 (VGEY…LGAA), 131-151 (LITL…LVGL), 163-183 (VTFF…AALL), 213-233 (VAVA…PFHA), 246-266 (VAAY…LAVV), 274-294 (ITGL…NLVA), 303-323 (LLAW…GALA), 341-361 (VAYT…VVAL), 386-406 (VGLA…AGLF), 419-439 (GAAG…AYYL), and 491-511 (VVLA…QLVL).

The protein belongs to the complex I subunit 2 family. As to quaternary structure, NDH-1 is composed of 14 different subunits. Subunits NuoA, H, J, K, L, M, N constitute the membrane sector of the complex.

Its subcellular location is the cell membrane. The catalysed reaction is a quinone + NADH + 5 H(+)(in) = a quinol + NAD(+) + 4 H(+)(out). In terms of biological role, NDH-1 shuttles electrons from NADH, via FMN and iron-sulfur (Fe-S) centers, to quinones in the respiratory chain. The immediate electron acceptor for the enzyme in this species is believed to be a menaquinone. Couples the redox reaction to proton translocation (for every two electrons transferred, four hydrogen ions are translocated across the cytoplasmic membrane), and thus conserves the redox energy in a proton gradient. This is NADH-quinone oxidoreductase subunit N from Salinispora tropica (strain ATCC BAA-916 / DSM 44818 / JCM 13857 / NBRC 105044 / CNB-440).